The following is a 116-amino-acid chain: Integration host factor subunit alpha (116 aa).

Disordered regions lie at residues 58–80 and 94–116; these read FGNFQVRDKPPRPGRNPKTGETI and QKLKSTVEQSGNPAEVSDDEAAE. Polar residues predominate over residues 94-105; that stretch reads QKLKSTVEQSGN.

This sequence belongs to the bacterial histone-like protein family. In terms of assembly, heterodimer of an alpha and a beta chain.

In terms of biological role, this protein is one of the two subunits of integration host factor, a specific DNA-binding protein that functions in genetic recombination as well as in transcriptional and translational control. The chain is Integration host factor subunit alpha from Bordetella avium (strain 197N).